The following is a 157-amino-acid chain: Endoribonuclease YbeY (157 aa).

Residues histidine 116, histidine 120, and histidine 126 each contribute to the Zn(2+) site.

Belongs to the endoribonuclease YbeY family. It depends on Zn(2+) as a cofactor.

The protein localises to the cytoplasm. Single strand-specific metallo-endoribonuclease involved in late-stage 70S ribosome quality control and in maturation of the 3' terminus of the 16S rRNA. This is Endoribonuclease YbeY from Renibacterium salmoninarum (strain ATCC 33209 / DSM 20767 / JCM 11484 / NBRC 15589 / NCIMB 2235).